The chain runs to 620 residues: Putative ribonuclease H protein At1g65750 (620 aa).

In terms of domain architecture, RNase H type-1 spans Cys456–Ser586. Asp465, Glu505, Asp529, and Asp578 together coordinate Mg(2+).

The cofactor is Mg(2+).

It catalyses the reaction Endonucleolytic cleavage to 5'-phosphomonoester.. The protein is Putative ribonuclease H protein At1g65750 of Arabidopsis thaliana (Mouse-ear cress).